The primary structure comprises 482 residues: MKFIIKLFPEITIKSQSVRLRFIKILTGNIRNVLKPLVEDVAVTRHWDHIEVRAKEESRRDLVRDALTRIPGIHHILEVEDHPYTDMHDIFEQTLAMYREQLEEKTFCVRVKRRGKHTFTSIEVERYVGGGLNQNIPSARVRLNHPEVTVNLEIEDDRLLLVRGRFEGQGGYPIGTQEDVLSLISGGFDSGVSSYMLMRRGCRVHYCFFNLGGSAHEIGVKQVAHYLWNRFGSSHRVRFVAIDFAPVVGEILEKVDDGQMGVVLKRMMVRAASRVAERYGIQALVTGEALGQVSSQTLTNLRLIDGVSDTLVLRPLIAHDKEHIIRLARNIGTEDFAKTMPEFCGVISKSPTVKAVKARIEAEEEHFDFAILDRVVDEAQTMDIRDIARQSEADVVEVETIESLAEGDVVLDIRAPDEQEAKPLQLADSEVICLPFYKLANAFGDLDQVRRYVLYCDRGVMSRLQALYLREQGYDNVRVYRP.

Residues 61–165 (DLVRDALTRI…DDRLLLVRGR (105 aa)) enclose the THUMP domain. ATP contacts are provided by residues 183–184 (LI), Lys-265, Gly-287, and Gln-296. Cysteines 344 and 456 form a disulfide. The Rhodanese domain maps to 404 to 482 (LAEGDVVLDI…GYDNVRVYRP (79 aa)). The active-site Cysteine persulfide intermediate is Cys-456.

It belongs to the ThiI family.

The protein localises to the cytoplasm. It carries out the reaction [ThiI sulfur-carrier protein]-S-sulfanyl-L-cysteine + a uridine in tRNA + 2 reduced [2Fe-2S]-[ferredoxin] + ATP + H(+) = [ThiI sulfur-carrier protein]-L-cysteine + a 4-thiouridine in tRNA + 2 oxidized [2Fe-2S]-[ferredoxin] + AMP + diphosphate. The enzyme catalyses [ThiS sulfur-carrier protein]-C-terminal Gly-Gly-AMP + S-sulfanyl-L-cysteinyl-[cysteine desulfurase] + AH2 = [ThiS sulfur-carrier protein]-C-terminal-Gly-aminoethanethioate + L-cysteinyl-[cysteine desulfurase] + A + AMP + 2 H(+). It participates in cofactor biosynthesis; thiamine diphosphate biosynthesis. Catalyzes the ATP-dependent transfer of a sulfur to tRNA to produce 4-thiouridine in position 8 of tRNAs, which functions as a near-UV photosensor. Also catalyzes the transfer of sulfur to the sulfur carrier protein ThiS, forming ThiS-thiocarboxylate. This is a step in the synthesis of thiazole, in the thiamine biosynthesis pathway. The sulfur is donated as persulfide by IscS. This Edwardsiella ictaluri (strain 93-146) protein is tRNA sulfurtransferase.